A 607-amino-acid chain; its full sequence is Matrix metalloproteinase-16 (607 aa).

The signal sequence occupies residues 1–31 (MILLAFSSGRRLDFVHRSGVFFLQTLLWILC). Positions 32-119 (ATVCGTEQYF…SSKFNIRRKR (88 aa)) are excised as a propeptide. Asparagine 83 carries an N-linked (GlcNAc...) asparagine glycan. The Cysteine switch motif lies at 99 to 106 (PRCGVPDQ). Cysteine 101 is a binding site for Zn(2+). Over 120 to 564 (YALTGQKWQH…LDNTASTVKA (445 aa)) the chain is Extracellular. Aspartate 183 contributes to the Ca(2+) binding site. The Zn(2+) site is built by histidine 193 and aspartate 195. Positions 200, 201, 203, and 205 each coordinate Ca(2+). Residue histidine 208 participates in Zn(2+) binding. Glycine 215, glycine 217, and aspartate 219 together coordinate Ca(2+). Histidine 221 contributes to the Zn(2+) binding site. Positions 223 and 226 each coordinate Ca(2+). A Zn(2+)-binding site is contributed by histidine 246. Glutamate 247 is an active-site residue. 2 residues coordinate Zn(2+): histidine 250 and histidine 256. Positions 281-340 (DDLQGIQKIYGPPDKIPPPTRPLPTVPPHRSVPPADPRRHDRPKPPRPPTGRPSYPGAKP) are disordered. The span at 294–315 (DKIPPPTRPLPTVPPHRSVPPA) shows a compositional bias: pro residues. Hemopexin repeat units follow at residues 340–388 (PNIC…WRGL), 389–434 (PPSI…GNGI), 436–484 (PHGI…KGIP), and 485–532 (ESPQ…FMGC). Residues cysteine 343 and cysteine 532 are joined by a disulfide bond. Residues 565 to 585 (IAIVIPCILALCLLVLVYTVF) form a helical membrane-spanning segment. The Cytoplasmic segment spans residues 586–607 (QFKRKGTPRHILYCKRSMQEWV).

It belongs to the peptidase M10A family. Interacts with CSPG4 through CSPG4 chondroitin sulfate glycosaminoglycan. It depends on Zn(2+) as a cofactor. Ca(2+) is required as a cofactor. In terms of processing, the precursor is cleaved by a furin endopeptidase.

The protein localises to the cell membrane. Functionally, endopeptidase that degrades various components of the extracellular matrix, such as collagen type III and fibronectin. Activates progelatinase A. Involved in the matrix remodeling of blood vessels. It has no effect on type I, II, IV and V collagen. However, upon interaction with CSPG4, it may be involved in degradation and invasion of type I collagen by melanoma cells. The sequence is that of Matrix metalloproteinase-16 (Mmp16) from Mus musculus (Mouse).